Here is a 214-residue protein sequence, read N- to C-terminus: Adenylate kinase (214 aa).

An ATP-binding site is contributed by Gly10 to Thr15. An NMP region spans residues Ser30 to Val59. AMP contacts are provided by residues Thr31, Arg36, Lys57–Val59, Gly85–Arg88, and Gln92. Positions Gly122–Asp159 are LID. ATP contacts are provided by residues Arg123 and Val132–Tyr133. Residues Arg156 and Arg167 each coordinate AMP. Arg200 contacts ATP.

This sequence belongs to the adenylate kinase family. As to quaternary structure, monomer.

The protein resides in the cytoplasm. The enzyme catalyses AMP + ATP = 2 ADP. It functions in the pathway purine metabolism; AMP biosynthesis via salvage pathway; AMP from ADP: step 1/1. Functionally, catalyzes the reversible transfer of the terminal phosphate group between ATP and AMP. Plays an important role in cellular energy homeostasis and in adenine nucleotide metabolism. The protein is Adenylate kinase of Yersinia pseudotuberculosis serotype O:1b (strain IP 31758).